The chain runs to 78 residues: U5-ctenitoxin-Pk1a (78 aa).

7 disulfides stabilise this stretch: C6/C23, C13/C29, C20/C52, C22/C40, C31/C38, C58/C73, and C69/C77.

As to expression, expressed by the venom gland.

The protein localises to the secreted. In terms of biological role, lethal neurotoxin. Causes spastic paralysis and death in mice in 4-6 minutes after intracerebroventricular injection at dose levels of 1.5 ug per mouse. This is U5-ctenitoxin-Pk1a from Phoneutria keyserlingi (Brazilian wandering spider).